The following is a 167-amino-acid chain: Interferon gamma (167 aa).

Positions 1 to 23 are cleaved as a signal peptide; it reads MSYTSYILAFQLCLILGSYGCYC. The residue at position 24 (glutamine 24) is a Pyrrolidone carboxylic acid. N-linked (GlcNAc...) asparagine glycosylation is found at asparagine 41, asparagine 108, and asparagine 117.

The protein belongs to the type II (or gamma) interferon family. In terms of assembly, homodimer. Interacts with IFNGR1 (via extracellular domain); this interaction promotes IFNGR1 dimerization. As to expression, released primarily from activated T lymphocytes.

The protein localises to the secreted. Functionally, type II interferon produced by immune cells such as T-cells and NK cells that plays crucial roles in antimicrobial, antiviral, and antitumor responses by activating effector immune cells and enhancing antigen presentation. Primarily signals through the JAK-STAT pathway after interaction with its receptor IFNGR1 to affect gene regulation. Upon IFNG binding, IFNGR1 intracellular domain opens out to allow association of downstream signaling components JAK2, JAK1 and STAT1, leading to STAT1 activation, nuclear translocation and transcription of IFNG-regulated genes. Many of the induced genes are transcription factors such as IRF1 that are able to further drive regulation of a next wave of transcription. Plays a role in class I antigen presentation pathway by inducing a replacement of catalytic proteasome subunits with immunoproteasome subunits. In turn, increases the quantity, quality, and repertoire of peptides for class I MHC loading. Increases the efficiency of peptide generation also by inducing the expression of activator PA28 that associates with the proteasome and alters its proteolytic cleavage preference. Up-regulates as well MHC II complexes on the cell surface by promoting expression of several key molecules such as cathepsins B/CTSB, H/CTSH, and L/CTSL. Participates in the regulation of hematopoietic stem cells during development and under homeostatic conditions by affecting their development, quiescence, and differentiation. This is Interferon gamma (IFNG) from Oryctolagus cuniculus (Rabbit).